We begin with the raw amino-acid sequence, 530 residues long: MNPIQPIPKSKIEIRIKCKDLTSKDLLSQSDPQAIVYLKQQQRNDWIQQGKTEKLKNQKSPEFKQSITVDYHFEEVQLLKIVVIDIDKDIKLLKDFDDHDLIGEVNVSLGSILSSPGGRMKMSLTKNGILSGSITISTEEIRETGANIYFALEGNHLDKKDLLSSDPYFKIYKSGGTLVYQSDVIKNTLNPTFPPVYLKLEELNGGDMFRELTFEFMDWDKIGDHDLIGRFTTNTDTILRGGALEFEIINPKKVGKSGYKNSGIIKFYIARIQGDPTFLDYLHGGLEINLMVAIDCTASNMPPDVSTSLHYNTPTQPSQYASSIAAVGNVLAPYDYDQMIEVVGFGGLYNGHTSHCFPFNLTNGDDNKSEAHGLQEVLDIYYNNVLKIPFSYPTNFENVIHHAIKRASKSTQSNQKYTVLLIITDGDISDTQKTIDELVSASKSALSVVIIGVGNYHFEAMKILDGDEKGLVDSKGNPSKRDICQFVPFNDFKNYPEALAHETLKEIPSQVLSFMKLSKIHPNQPRQFNC.

2 consecutive C2 domains span residues 1–122 (MNPI…RMKM) and 130–248 (LSGS…EFEI). Residues aspartate 25, aspartate 31, aspartate 85, aspartate 87, and aspartate 100 each contribute to the Ca(2+) site. A VWFA domain is found at 289 to 507 (NLMVAIDCTA…ALAHETLKEI (219 aa)).

Belongs to the copine family. Ca(2+) serves as cofactor.

This Dictyostelium discoideum (Social amoeba) protein is Copine-D (cpnD).